The chain runs to 147 residues: Hemoglobin larval subunit beta-1 (147 aa).

The 145-residue stretch at 3–147 folds into the Globin domain; sequence HLSADEKSAI…LVAALSHGYF (145 aa). Heme b-binding residues include histidine 64 and histidine 93.

This sequence belongs to the globin family. Heterotetramer of two alpha chains and two beta chains. As to expression, red blood cells.

In terms of biological role, this is a larval (tadpole) beta-globin. This chain is Hemoglobin larval subunit beta-1, found in Xenopus laevis (African clawed frog).